The chain runs to 47 residues: Defensin Ec-AMP-D1 (47 aa).

4 disulfides stabilise this stretch: cysteine 3-cysteine 47, cysteine 14-cysteine 34, cysteine 20-cysteine 41, and cysteine 24-cysteine 43.

In terms of biological role, has antifungal activity. Inhibits spore germination in F.graminearum (IC(50)=15 ug/ml), F.oxysporum (IC(50)=102 ug/ml), F.verticillioides (IC(50)=8.5 ug/ml) and D.maydis (IC(50)=12.5 ug/ml), but not in C.graminicola, B.cinerea and H.sativum at concentrations below 30 ug/ml. Inhibits hyphal development in P.infestans (IC(50)=25.5 ug/ml), but not release of zoospores. At concentrations above 100 ug/ml, induces morphological changes such as lysis of hyphae and sporangia in P.infestans. The chain is Defensin Ec-AMP-D1 from Echinochloa crus-galli (Barnyard grass).